The chain runs to 499 residues: MSDTVKVGFVPLSTAPRGILVAFCDESLRLGAATDKALGGAAELIQRAAAAARFKGKDGAVLDLLAPQGIKIQRLLVIGTGKSGDHKEKDFLKYGGTLAGKLNAGTEPVMVMAELPSGPMTPDQASSLAAGIRLRAYRFDRYKTKKKDEEAAVSAAISLAVADVAAAKKAFAPRSHVTDGVILARDLVNEPPNVLYPEEFAKRASALRKLGVTVEILDVPAMKKLGMGALLGVGQGSARPSRTVVMRYNGGKKGDQPVAFIGKGVCFDTGGISIKPAGSMEDMKGDMGGAACVVGLMHALAARKAKANVIGAIGLVENMPDGNAQRPGDIVTSMSGQTIEIINTDAEGRLVLADVLWYVATKFKPKFMIDLATLTGAIMVALGTEHAGLFANNDDLAEKLLKAGQETGEKVWRMPLGPEYDKLIDSQFADMKNTGGRHGGSITAAQFLQRFVSDTPWAHLDIAGTAMGAPKSEVNQSWGSGYGVRLLDRLVWDCYEARS.

Residues Lys263 and Asp268 each contribute to the Mn(2+) site. Lys275 is an active-site residue. 3 residues coordinate Mn(2+): Asp286, Asp345, and Glu347. The active site involves Arg349.

This sequence belongs to the peptidase M17 family. Mn(2+) serves as cofactor.

It localises to the cytoplasm. It catalyses the reaction Release of an N-terminal amino acid, Xaa-|-Yaa-, in which Xaa is preferably Leu, but may be other amino acids including Pro although not Arg or Lys, and Yaa may be Pro. Amino acid amides and methyl esters are also readily hydrolyzed, but rates on arylamides are exceedingly low.. The catalysed reaction is Release of an N-terminal amino acid, preferentially leucine, but not glutamic or aspartic acids.. Presumably involved in the processing and regular turnover of intracellular proteins. Catalyzes the removal of unsubstituted N-terminal amino acids from various peptides. The chain is Probable cytosol aminopeptidase from Bradyrhizobium sp. (strain BTAi1 / ATCC BAA-1182).